Here is a 299-residue protein sequence, read N- to C-terminus: Triplex capsid protein 1 (299 aa).

It belongs to the herpesviridae TRX1 protein family. Interacts with TRX2, MCP and capsid vertex component 2/CVC2.

Its subcellular location is the virion. The protein resides in the host nucleus. Structural component of the T=16 icosahedral capsid. The capsid is composed of pentamers and hexamers of major capsid protein/MCP, which are linked together by heterotrimers called triplexes. These triplexes are formed by a single molecule of triplex protein 1/TRX1 and two copies of triplex protein 2/TRX2. Additionally, TRX1 is required for efficient transport of TRX2 to the nucleus, which is the site of capsid assembly. The chain is Triplex capsid protein 1 from Homo sapiens (Human).